A 648-amino-acid chain; its full sequence is Macrolide export ATP-binding/permease protein MacB (648 aa).

The ABC transporter domain occupies 5–243 (LELKDIRRSY…TGGTEPVVNT (239 aa)). Residue 41 to 48 (GASGSGKS) coordinates ATP. 4 helical membrane passes run 273–293 (LLTMLGIIIGIASVVSIVVVG), 523–543 (LFLTLVAVISLVVGGIGVMNI), 576–596 (AVLVCLVGGALGITLSLLIAF), and 611–631 (PLALLLAFLCSTVTGILFGWL).

This sequence belongs to the ABC transporter superfamily. Macrolide exporter (TC 3.A.1.122) family. In terms of assembly, homodimer. Part of the tripartite efflux system MacAB-TolC, which is composed of an inner membrane transporter, MacB, a periplasmic membrane fusion protein, MacA, and an outer membrane component, TolC. The complex forms a large protein conduit and can translocate molecules across both the inner and outer membranes. Interacts with MacA.

The protein resides in the cell inner membrane. Part of the tripartite efflux system MacAB-TolC. MacB is a non-canonical ABC transporter that contains transmembrane domains (TMD), which form a pore in the inner membrane, and an ATP-binding domain (NBD), which is responsible for energy generation. Confers resistance against macrolides. This chain is Macrolide export ATP-binding/permease protein MacB, found in Escherichia coli O6:K15:H31 (strain 536 / UPEC).